The following is a 261-amino-acid chain: Cytochrome c oxidase subunit 3 (261 aa).

Residues 1–15 lie on the Mitochondrial matrix side of the membrane; the sequence is MTHQSHAYHMVKPSP. A helical transmembrane segment spans residues 16 to 34; sequence WPLTGALSALLMTSGLAMW. Residues 35-40 lie on the Mitochondrial intermembrane side of the membrane; that stretch reads FHFHSM. A helical transmembrane segment spans residues 41–66; sequence TLLMLGLLTNTLTMYQWWRDVTREST. Residues 67–72 are Mitochondrial matrix-facing; sequence YQGHHT. The helical transmembrane segment at 73-105 threads the bilayer; the sequence is PPVQKGLRYGMILFITSEVFFFAGFFWAFYHSS. Topologically, residues 106 to 128 are mitochondrial intermembrane; it reads LAPTPQLGGHWPPTGITPLNPLE. Residues 129–152 form a helical membrane-spanning segment; it reads VPLLNTSVLLASGVSITWAHHSLM. Topologically, residues 153–155 are mitochondrial matrix; it reads ENN. Residues 156–183 traverse the membrane as a helical segment; sequence RNQMIQALLITILLGLYFTLLQASEYFE. Residues 184-190 are Mitochondrial intermembrane-facing; the sequence is SPFTISD. Residues 191–223 form a helical membrane-spanning segment; sequence GIYGSTFFVATGFHGLHVIIGSTFLTICFIRQL. The Mitochondrial matrix segment spans residues 224 to 232; that stretch reads MFHFTSKHH. A helical transmembrane segment spans residues 233–256; the sequence is FGFEAAAWYWHFVDVVWLFLYVSI. The Mitochondrial intermembrane portion of the chain corresponds to 257–261; the sequence is YWWGS.

This sequence belongs to the cytochrome c oxidase subunit 3 family. Component of the cytochrome c oxidase (complex IV, CIV), a multisubunit enzyme composed of 14 subunits. The complex is composed of a catalytic core of 3 subunits MT-CO1, MT-CO2 and MT-CO3, encoded in the mitochondrial DNA, and 11 supernumerary subunits COX4I1 (or COX4I2), COX5A, COX5B, COX6A1 (or COX6A2), COX6B1 (or COX6B2), COX6C, COX7A2 (or COX7A1), COX7B, COX7C, COX8A and NDUFA4, which are encoded in the nuclear genome. The complex exists as a monomer or a dimer and forms supercomplexes (SCs) in the inner mitochondrial membrane with NADH-ubiquinone oxidoreductase (complex I, CI) and ubiquinol-cytochrome c oxidoreductase (cytochrome b-c1 complex, complex III, CIII), resulting in different assemblies (supercomplex SCI(1)III(2)IV(1) and megacomplex MCI(2)III(2)IV(2)).

It localises to the mitochondrion inner membrane. It catalyses the reaction 4 Fe(II)-[cytochrome c] + O2 + 8 H(+)(in) = 4 Fe(III)-[cytochrome c] + 2 H2O + 4 H(+)(out). Component of the cytochrome c oxidase, the last enzyme in the mitochondrial electron transport chain which drives oxidative phosphorylation. The respiratory chain contains 3 multisubunit complexes succinate dehydrogenase (complex II, CII), ubiquinol-cytochrome c oxidoreductase (cytochrome b-c1 complex, complex III, CIII) and cytochrome c oxidase (complex IV, CIV), that cooperate to transfer electrons derived from NADH and succinate to molecular oxygen, creating an electrochemical gradient over the inner membrane that drives transmembrane transport and the ATP synthase. Cytochrome c oxidase is the component of the respiratory chain that catalyzes the reduction of oxygen to water. Electrons originating from reduced cytochrome c in the intermembrane space (IMS) are transferred via the dinuclear copper A center (CU(A)) of subunit 2 and heme A of subunit 1 to the active site in subunit 1, a binuclear center (BNC) formed by heme A3 and copper B (CU(B)). The BNC reduces molecular oxygen to 2 water molecules using 4 electrons from cytochrome c in the IMS and 4 protons from the mitochondrial matrix. In Homo sapiens (Human), this protein is Cytochrome c oxidase subunit 3 (MT-CO3).